The following is a 342-amino-acid chain: Aromatic amino acid aminotransferase (342 aa).

Position 214 is an N6-(pyridoxal phosphate)lysine (K214).

This sequence belongs to the class-II pyridoxal-phosphate-dependent aminotransferase family. Homodimer. It depends on pyridoxal 5'-phosphate as a cofactor.

The enzyme catalyses an aromatic L-alpha-amino acid + 2-oxoglutarate = an aromatic oxo-acid + L-glutamate. Functionally, aminotransferase that catalyzes the conversion of aromatic amino acids and 2-oxoglutarate into corresponding aromatic oxo acids and L-glutamate. In Corynebacterium efficiens (strain DSM 44549 / YS-314 / AJ 12310 / JCM 11189 / NBRC 100395), this protein is Aromatic amino acid aminotransferase.